We begin with the raw amino-acid sequence, 417 residues long: Gamma-glutamyl phosphate reductase (417 aa).

The protein belongs to the gamma-glutamyl phosphate reductase family.

It localises to the cytoplasm. The enzyme catalyses L-glutamate 5-semialdehyde + phosphate + NADP(+) = L-glutamyl 5-phosphate + NADPH + H(+). It functions in the pathway amino-acid biosynthesis; L-proline biosynthesis; L-glutamate 5-semialdehyde from L-glutamate: step 2/2. In terms of biological role, catalyzes the NADPH-dependent reduction of L-glutamate 5-phosphate into L-glutamate 5-semialdehyde and phosphate. The product spontaneously undergoes cyclization to form 1-pyrroline-5-carboxylate. The sequence is that of Gamma-glutamyl phosphate reductase from Clostridium novyi (strain NT).